The sequence spans 164 residues: Transcription elongation factor GreA (164 aa).

Positions 50-75 (YHAAREEQGQQEARIRQLQDLLNIAK) form a coiled coil.

The protein belongs to the GreA/GreB family.

In terms of biological role, necessary for efficient RNA polymerase transcription elongation past template-encoded arresting sites. The arresting sites in DNA have the property of trapping a certain fraction of elongating RNA polymerases that pass through, resulting in locked ternary complexes. Cleavage of the nascent transcript by cleavage factors such as GreA or GreB allows the resumption of elongation from the new 3'terminus. GreA releases sequences of 2 to 3 nucleotides. The protein is Transcription elongation factor GreA of Mycobacterium leprae (strain Br4923).